Reading from the N-terminus, the 568-residue chain is Glucose-6-phosphate isomerase, cytosolic 1 (568 aa).

Residue glutamate 360 is the Proton donor of the active site. Residues histidine 391 and lysine 516 contribute to the active site.

It belongs to the GPI family. As to quaternary structure, homodimer.

The protein localises to the cytoplasm. It carries out the reaction alpha-D-glucose 6-phosphate = beta-D-fructose 6-phosphate. It functions in the pathway carbohydrate degradation; glycolysis; D-glyceraldehyde 3-phosphate and glycerone phosphate from D-glucose: step 2/4. The polypeptide is Glucose-6-phosphate isomerase, cytosolic 1 (PGIC1) (Clarkia arcuata (Glandular clarkia)).